We begin with the raw amino-acid sequence, 420 residues long: FLYWCH transcription factor 3 (420 aa).

Over residues 87–104 (SSTSPDSQPSSSSSVMSS) the composition is skewed to low complexity. 2 disordered regions span residues 87-107 (SSTSPDSQPSSSSSVMSSTDE) and 119-138 (KINKAQRQSSPNSSKPYTPR). Polar residues predominate over residues 123 to 134 (AQRQSSPNSSKP). The FLYWCH-type zinc-finger motif lies at 140–195 (IRERVLFDEHLYVFDKCSYDSKKRFFRCERKNTCPARIHTPFDAERVIHKVQVHNH).

Probable transcription factor. May bind to the promoters of target genes, including micro-RNA genes, in order to repress expression, and acting redundantly with flh-2. The protein is FLYWCH transcription factor 3 of Caenorhabditis elegans.